Here is a 773-residue protein sequence, read N- to C-terminus: Kelch domain-containing protein 7A (773 aa).

The chain crosses the membrane as a helical span at residues 23–40 (VVLSAAALLLVTAAYKLY). The N-linked (GlcNAc...) asparagine glycan is linked to asparagine 61. 2 disordered regions span residues 64–99 (EALG…LDYS) and 114–207 (SEEA…APNG). Serine 89 is modified (phosphoserine). Basic and acidic residues predominate over residues 114 to 126 (SEEATRKGSDESQ). A glycan (N-linked (GlcNAc...) asparagine) is linked at asparagine 256. Positions 296–355 (KADSRPVPCPAALADAPSPGPGPEPLVTGAASRDEAANTAGGGASEAASPQPVASPSAPG) are disordered. 5 Kelch repeats span residues 323–370 (TGAA…ENPE), 488–534 (KRLV…LCTL), 537–585 (YLFV…ALEG), 586–628 (HLYA…ATVC), and 631–673 (EIFV…AVNG). Residues 340 to 354 (SEAASPQPVASPSAP) show a composition bias toward low complexity. Serine 361 carries the post-translational modification Phosphoserine.

The protein localises to the membrane. The polypeptide is Kelch domain-containing protein 7A (Klhdc7a) (Mus musculus (Mouse)).